Consider the following 219-residue polypeptide: Small ribosomal subunit protein uS3 (219 aa).

The KH type-2 domain maps to 38 to 106 (IREYINVRLK…RVHINILEVK (69 aa)).

The protein belongs to the universal ribosomal protein uS3 family. In terms of assembly, part of the 30S ribosomal subunit. Forms a tight complex with proteins S10 and S14.

Functionally, binds the lower part of the 30S subunit head. Binds mRNA in the 70S ribosome, positioning it for translation. In Bacillus thuringiensis (strain Al Hakam), this protein is Small ribosomal subunit protein uS3.